We begin with the raw amino-acid sequence, 850 residues long: Coiled-coil and C2 domain-containing protein 1B (850 aa).

Positions 1 to 10 (MPGPRPRKGP) are enriched in basic residues. Disordered regions lie at residues 1–21 (MPGPRPRKGPKTSGQGAETAK), 54–73 (LTGETGSTSRKPAPKGRAPL), and 114–145 (GVDEETGLVDDSEETSPDLSEEKTRDNTEQPV). Positions 114-129 (GVDEETGLVDDSEETS) are enriched in acidic residues. Residues 167–213 (LQALLEERIQNYREAAASAKEAGEAAKARRCERGLKTLESQLATVRK) are a coiled coil. Disordered regions lie at residues 215–277 (GKIC…SDPD) and 436–525 (FAEL…SPSV). Basic and acidic residues predominate over residues 234-244 (AHQERPSKDSE). Over residues 440 to 450 (PVPPGFPPIPG) the composition is skewed to pro residues. Composition is skewed to low complexity over residues 489–502 (PAQAPLAKKPAQPL) and 511–524 (EPKASSSKESLSPS). Ser-585 carries the post-translational modification Phosphoserine. The residue at position 588 (Thr-588) is a Phosphothreonine. Residues 668 to 807 (DPPSHHFELK…EKECEIREIM (140 aa)) form the C2 domain.

In terms of assembly, interacts with CHMP4B. Expressed in epididymal sperm but not in testicular sperm (at protein level).

It is found in the nucleus. Functionally, transcription factor that binds specifically to the DRE (dual repressor element) and represses HTR1A gene transcription in neuronal cells. In Rattus norvegicus (Rat), this protein is Coiled-coil and C2 domain-containing protein 1B (Cc2d1b).